We begin with the raw amino-acid sequence, 277 residues long: Tryptophan synthase alpha chain (277 aa).

Residues E51 and E62 each act as proton acceptor in the active site.

It belongs to the TrpA family. Tetramer of two alpha and two beta chains.

The catalysed reaction is (1S,2R)-1-C-(indol-3-yl)glycerol 3-phosphate + L-serine = D-glyceraldehyde 3-phosphate + L-tryptophan + H2O. Its pathway is amino-acid biosynthesis; L-tryptophan biosynthesis; L-tryptophan from chorismate: step 5/5. Functionally, the alpha subunit is responsible for the aldol cleavage of indoleglycerol phosphate to indole and glyceraldehyde 3-phosphate. The protein is Tryptophan synthase alpha chain of Phenylobacterium zucineum (strain HLK1).